Reading from the N-terminus, the 216-residue chain is Transmembrane emp24 domain-containing protein eca (216 aa).

The N-terminal stretch at 1 to 20 (MRNQFICVALLLCALNSACG) is a signal peptide. The Lumenal portion of the chain corresponds to 21–183 (LYFHISETER…RHTSESTNSR (163 aa)). The GOLD domain maps to 30-126 (RKCFIEEVPD…QLRVHLDIQV (97 aa)). Positions 134–164 (ANVAQKEKLTELQLRIRQLLDQVDQITKEQN) form a coiled coil. The chain crosses the membrane as a helical span at residues 184 to 203 (VLWWSLAQTVVLVCMGFWQM). The Cytoplasmic portion of the chain corresponds to 204–216 (RHLKSFFEAKKLV). The short motif at 213–216 (KKLV) is the Prevents secretion from ER element.

It belongs to the EMP24/GP25L family.

It localises to the endoplasmic reticulum membrane. In terms of biological role, eca and bai are essential, though not redundant, for dorsoventral patterning of the embryo. Specifically required during early embryogenesis for the activity of maternal tkv, while the zygotic tkv is not affected. Involved in Golgi organization. In Drosophila willistoni (Fruit fly), this protein is Transmembrane emp24 domain-containing protein eca.